The sequence spans 277 residues: Transcription factor HES-4-B (277 aa).

The segment at 1–44 (MPADSMEKPTASPIAGAPANSAQTPDKPKSASEHRKSSKPIMEK) is disordered. The segment covering 26–35 (DKPKSASEHR) has biased composition (basic and acidic residues). The bHLH domain maps to 34–91 (HRKSSKPIMEKRRRARINESLGQLKTLILDALKKDSSRHSKLEKADILEMTVKHLRNL). An Orange domain is found at 110–143 (YRAGFNECMNEVTRFLSTCEGVNTEVRTRLLGHL). Residues 258-277 (VSPLGGSTRADSAESVWRPW) form a disordered region. The WRPW motif signature appears at 274 to 277 (WRPW).

Transcription repression requires formation of a complex with a corepressor protein of the Groucho/TLE family. Interacts with the bHLH protein hes6; this interaction may inhibit the transcriptional repressor activity. Binds DNA in the form of a heterodimer with the bHLH protein hey1/hrt1. Interacts (via Orange domain) with id3 (via HLH domain). Dynamically expressed in the borders of several tissue territories. Expressed in the pre-placodal ectoderm (PPE) from gastrula stage. During gastrulation, expressed in the deep layer of the dorsal lip, the Spemann organizer and three distinct regions in the prospective neuroectoderm: neural plate border, presumptive floor plate/notoplate and anterior neural plate. At later stages, expression is localized to the anterior of the prechordal plate, the presomitic mesoderm, neural tube, neural crest derivatives and several tissues of the central nervous system, with expression in the developing floor plate continues to at least the tadpole stage. From the early tailbud stage, expressed in the dorsoanterior region of the developing pronephros. During early tailbud stages, broadly expressed within the pronephric mesoderm. and in the sensorial layer of the ectoderm covering the pronephros anlagen. During late tailbud to early tadpole stages, expressed in the ventral region of the pronephros. Expression remains in the proximal and distal tubules at late tadpole stages (stage 35).

The protein localises to the nucleus. Functionally, transcriptional repressor. Binds DNA on N-box motifs: 5'-CACNAG-3'. Promotes floor plate development and prechordal plate development. Required for lens development as early as the stage of lens field formation, partly through regulation of gene expression of the cell cycle inhibitor cdknx/p27(xic1). Required for formation of the neural crest downstream of multiple signaling pathways, and acts at the neural plate border via both DNA-binding dependent and independent mechanisms; acts in a DNA-binding dependent manner to repress pro-apoptotic and neural crest differentiation genes, including id3, delta1, and cdknx/p27(xic1), and thus promote the cell survival of neural plate border cells and maintain them in an undifferentiated state. Represses transcription of id3, at least in part through the repression of bmp4. On the other hand, acts in a DNA-independent manner separate from the transcriptional repressor function, to stimulate cell proliferation and promote neural crest formation. Via this DNA-independent route, acts in neurulae upstream of stat3 to transiently up-regulate the notch ligand dll1/delta1, which in turn up-regulates id3 expression. Then interacts directly with id3, which blocks the transcriptional repressor function of hes4-B/hairy2b to allow the progression of neural crest progenitors through specification and differentiation. Also acts via repressor-dependent and repressor-independent mechanisms in early gastrulae to establish the prospective anterior prechordal mesoderm identity in the Spemann organizer; induces specific genes independently from direct transcriptional regulation, and represses the genes specific for neighboring tissues through direct transcriptional repression. Modulates lateral inhibition during notch signaling and regulates the cell context dependent effects of notch (which can have inhibitory, permissive or enhancing roles in muscle or neural differentiation). Inhibits myogenesis. The chain is Transcription factor HES-4-B (hes4-b) from Xenopus laevis (African clawed frog).